Consider the following 62-residue polypeptide: Potassium channel toxin alpha-KTx Tx773 (62 aa).

The signal sequence occupies residues 1 to 18; sequence MQKLFIVLLLFCILRLDA. 3 disulfides stabilise this stretch: Cys28–Cys46, Cys33–Cys59, and Cys37–Cys61.

This sequence belongs to the short scorpion toxin superfamily. Potassium channel inhibitor family. Alpha-KTx 23 subfamily. In terms of tissue distribution, expressed by the venom gland.

The protein resides in the secreted. In terms of biological role, may block potassium channels. The chain is Potassium channel toxin alpha-KTx Tx773 from Buthus israelis (Israeli scorpion).